Consider the following 153-residue polypeptide: Transcriptional repressor NrdR (153 aa).

The segment at 3–34 (CPSCFHNGTRVLDSRPVDEGRSIRRRRECESC) is a zinc-finger region. The region spanning 49–139 (LIVVKKEGTR…VYRQFKDLNV (91 aa)) is the ATP-cone domain.

The protein belongs to the NrdR family. Zn(2+) serves as cofactor.

Functionally, negatively regulates transcription of bacterial ribonucleotide reductase nrd genes and operons by binding to NrdR-boxes. The chain is Transcriptional repressor NrdR from Bacillus mycoides (strain KBAB4) (Bacillus weihenstephanensis).